A 295-amino-acid chain; its full sequence is Small ribosomal subunit biogenesis GTPase RsgA (295 aa).

The region spanning 68–228 (KNLLVKPHVA…VVDTPGFANL (161 aa)) is the CP-type G domain. Residues 117 to 120 (NKMD) and 170 to 178 (GLSGVGKSS) contribute to the GTP site. The Zn(2+) site is built by Cys-250, Cys-255, His-257, and Cys-263.

The protein belongs to the TRAFAC class YlqF/YawG GTPase family. RsgA subfamily. As to quaternary structure, monomer. Associates with 30S ribosomal subunit, binds 16S rRNA. Requires Zn(2+) as cofactor.

Its subcellular location is the cytoplasm. One of several proteins that assist in the late maturation steps of the functional core of the 30S ribosomal subunit. Helps release RbfA from mature subunits. May play a role in the assembly of ribosomal proteins into the subunit. Circularly permuted GTPase that catalyzes slow GTP hydrolysis, GTPase activity is stimulated by the 30S ribosomal subunit. This chain is Small ribosomal subunit biogenesis GTPase RsgA, found in Thermotoga neapolitana (strain ATCC 49049 / DSM 4359 / NBRC 107923 / NS-E).